The sequence spans 448 residues: Enolase (448 aa).

Residue Gln164 coordinates (2R)-2-phosphoglycerate. Catalysis depends on Glu206, which acts as the Proton donor. Mg(2+) contacts are provided by Asp243, Glu289, and Asp316. (2R)-2-phosphoglycerate-binding residues include Lys341, Arg370, Ser371, and Lys392. Lys341 functions as the Proton acceptor in the catalytic mechanism.

Belongs to the enolase family. It depends on Mg(2+) as a cofactor.

It localises to the cytoplasm. The protein resides in the secreted. It is found in the cell surface. It carries out the reaction (2R)-2-phosphoglycerate = phosphoenolpyruvate + H2O. The protein operates within carbohydrate degradation; glycolysis; pyruvate from D-glyceraldehyde 3-phosphate: step 4/5. Catalyzes the reversible conversion of 2-phosphoglycerate (2-PG) into phosphoenolpyruvate (PEP). It is essential for the degradation of carbohydrates via glycolysis. The chain is Enolase from Oenococcus oeni (strain ATCC BAA-331 / PSU-1).